The following is a 265-amino-acid chain: Mlc titration factor A (265 aa).

Residues His111, His148, His152, and Glu211 each coordinate Zn(2+).

It belongs to the MtfA family. As to quaternary structure, interacts with Mlc. The cofactor is Zn(2+).

It is found in the cytoplasm. In terms of biological role, involved in the modulation of the activity of the glucose-phosphotransferase system (glucose-PTS). Interacts with the transcriptional repressor Mlc, preventing its interaction with DNA and leading to the modulation of expression of genes regulated by Mlc, including ptsG, which encodes the PTS system glucose-specific EIICB component. Shows zinc-dependent metallopeptidase activity. In Salmonella schwarzengrund (strain CVM19633), this protein is Mlc titration factor A.